We begin with the raw amino-acid sequence, 634 residues long: Nucleoside triphosphatase I (634 aa).

The 163-residue stretch at 41–203 folds into the Helicase ATP-binding domain; it reads FLGLDSMNSL…ALLVNLLRPG (163 aa). 54 to 61 contacts ATP; that stretch reads QETGVGKT. The DEXH box motif lies at 140 to 143; that stretch reads DECH. The Helicase C-terminal domain maps to 355-531; the sequence is SLYQALYEHS…EFSQLYRVLK (177 aa). The interval 456 to 523 is binding to the cap-specific mRNA (nucleoside-2'-O-)-methyltransferase; sequence DIFILDMTWN…EIIQNKAREF (68 aa).

The protein belongs to the helicase family. NPH I subfamily. As to quaternary structure, monomer. Interacts (via C-terminus) with RAP94 (via N-terminus). Interacts with the cap-specific mRNA (nucleoside-2'-O-)-methyltransferase.

It is found in the virion. It catalyses the reaction a ribonucleoside 5'-triphosphate + H2O = a ribonucleoside 5'-diphosphate + phosphate + H(+). In terms of biological role, DNA-dependent ATPase required for providing the needed energy to achieve the termination of early transcripts. Acts in concert with the RAP94 subunit of the virion RNA polymerase and the capping enzyme/VTF to catalyze release of UUUUUNU-containing nascent RNA from the elongation complex. NPH-I must bind ssDNA in order to exhibit ATPase activity. This is Nucleoside triphosphatase I (NPH1) from Homo sapiens (Human).